The chain runs to 181 residues: MKNMRVELKTKDMKEFYKIFSESEFIITDDSKLINETVNYLKKKYKNSTTKKKLIPLDLFKAIVLIMMKKIKELDSEITLYDIGYEFGKHLNPKRYSDLKKFFKENNLGTLKVDSRKPLVLKVENCSFCEDLSFEEPICYFDAGLIAGAYECILKKPVVVDEIKCMARGDDACYFKVEVVK.

Belongs to the M.jannaschii MJ0150/MJ0739/MJ0745/MJ1460/MJ1642 family.

This is an uncharacterized protein from Methanocaldococcus jannaschii (strain ATCC 43067 / DSM 2661 / JAL-1 / JCM 10045 / NBRC 100440) (Methanococcus jannaschii).